The sequence spans 285 residues: MEQRNRLGALGYLPPLLLHALLLFVADAAFTEVPKDVTVREGDDIEMPCAFRASGATSYSLEIQWWYLKEPPRELLHELALSVPGARSKVTNKDATKISTVRVQGNDISHRLRLSAVRLQDEGVYECRVSDYSDDDTQEHKAQAMLRVLSRFAPPNMQAAEAVSHIQSSGPRRHGPASAANANNAGAASRTTSEPGRGDKSPPPGSPPAAIDPAVPEAAAASAAHTPTTTVAAAAAASSASPPSGQAVLLRQRHGSGTGRSYTTDPLLSLLLLALHKFLRLLLGH.

The N-terminal stretch at 1–28 (MEQRNRLGALGYLPPLLLHALLLFVADA) is a signal peptide. The Ig-like V-type domain maps to 29–143 (AFTEVPKDVT…DDDTQEHKAQ (115 aa)). Residues 29 to 263 (AFTEVPKDVT…HGSGTGRSYT (235 aa)) are Extracellular-facing. Cys-49 and Cys-127 are joined by a disulfide. Residues 161–226 (EAVSHIQSSG…EAAAASAAHT (66 aa)) form a disordered region. Composition is skewed to low complexity over residues 177 to 189 (ASAA…GAAS) and 208 to 226 (PAAI…AAHT). The helical transmembrane segment at 264 to 284 (TDPLLSLLLLALHKFLRLLLG) threads the bilayer. A topological domain (cytoplasmic) is located at residue His-285.

It is found in the membrane. This Homo sapiens (Human) protein is V-set and transmembrane domain-containing protein 2B (VSTM2B).